The chain runs to 338 residues: Serpentine receptor class alpha-31 (338 aa).

The next 7 membrane-spanning stretches (helical) occupy residues 23-43, 59-79, 108-125, 142-162, 188-208, 240-260, and 276-296; these read GNHC…VFAI, LLFS…GIRI, LYYY…SLFF, FSKI…YWIF, VNEF…VIFF, VCII…TTEI, and SIAF…IIIY.

Belongs to the nematode receptor-like protein sra family.

The protein localises to the membrane. The protein is Serpentine receptor class alpha-31 (sra-31) of Caenorhabditis elegans.